The following is a 481-amino-acid chain: Pentatricopeptide repeat-containing protein At2g48000 (481 aa).

PPR repeat units lie at residues 147–181 (TTSVYNALMGAYLCNGLSHHCEQLFLDFNSQQDGP), 187–221 (SVSTYNILISLYGRLIMVERMESVFLQLQQLNILP), 222–256 (DSSTYNNLIAGYIYAWDWDKMEATFHSMKNGLVKP), 257–287 (TLATYLLMLRGYANSGNLLRMEDMYQAVKRH), 292–324 (EIKLIESMICAYYRSCHKDRIRKIKTLSKLIPK), 328–362 (KPWLYLLLMQVYAKDDNLHAMENFIDQAITKGLQI), 364–398 (TDGIMRSIVASYFRCNAVDKLAKFVQRANSAGWKM), 399–433 (SRSMFHGLMIMYGSQKRFKEMENVLSEMESFKISR), and 434–469 (SKKTLCILLRVYAATHGQEHKVNQVAGMMLKHGHDF).

This sequence belongs to the PPR family. P subfamily.

This Arabidopsis thaliana (Mouse-ear cress) protein is Pentatricopeptide repeat-containing protein At2g48000.